Reading from the N-terminus, the 268-residue chain is Probable ribosomal RNA small subunit methyltransferase A (268 aa).

S-adenosyl-L-methionine-binding residues include H23, L25, G50, E71, D95, and N110.

The protein belongs to the class I-like SAM-binding methyltransferase superfamily. rRNA adenine N(6)-methyltransferase family. RsmA subfamily.

It localises to the cytoplasm. Its function is as follows. Specifically dimethylates two adjacent adenosines in the loop of a conserved hairpin near the 3'-end of 16S rRNA in the 30S particle. May play a critical role in biogenesis of 30S subunits. The sequence is that of Probable ribosomal RNA small subunit methyltransferase A from Pyrococcus horikoshii (strain ATCC 700860 / DSM 12428 / JCM 9974 / NBRC 100139 / OT-3).